We begin with the raw amino-acid sequence, 370 residues long: MNIQSNNSPNLSNNIVSKQVYYAHPPPTIDPNDPVQISFPTTEVVGHGSFGVVFATVIQETNEKVAIKKVLQDKRFKNRELEIMKMLSHINIIDLKYFFYERDSQDEIYLNLILEYMPQSLYQRLRHFVHQRTPMSRLEIKYYMFQLFKSLNYLHHFANVCHRDIKPQNLLVDPETWSLKLCDFGSAKQLKPTEPNVSYICSRYYRAPELIFGATNYTNQIDIWSSGCVMAELLLGQPMFPGESGIDQLVEIIKILGTPSKQEICSMNPNYMEHKFPQIKPIPLSRVFKKEDDQTVEFLADVLKYDPLERFNALQCLCSPYFDELKLDDGKINQITTDLKLLEFDENVELGHLSPDELSSVKKKLYPKSK.

Positions 39 to 322 (FPTTEVVGHG…ALQCLCSPYF (284 aa)) constitute a Protein kinase domain. ATP-binding positions include 45-53 (VGHGSFGVV) and Lys-68. The active-site Proton acceptor is the Asp-164. Tyr-199 bears the Phosphotyrosine mark.

Belongs to the protein kinase superfamily. CMGC Ser/Thr protein kinase family. GSK-3 subfamily. As to quaternary structure, interacts with TDA1.

It carries out the reaction L-seryl-[protein] + ATP = O-phospho-L-seryl-[protein] + ADP + H(+). The catalysed reaction is L-threonyl-[protein] + ATP = O-phospho-L-threonyl-[protein] + ADP + H(+). Functionally, serine/threonine protein kinase that is thought to function in regulating kinetochore activity and entry into meiosis. Could phosphorylate IME1. The polypeptide is Serine/threonine-protein kinase RIM11/MSD1 (RIM11) (Saccharomyces cerevisiae (strain ATCC 204508 / S288c) (Baker's yeast)).